Consider the following 303-residue polypeptide: NAD(+)--arginine ADP-ribosyltransferase Lart1 (303 aa).

Its subcellular location is the secreted. The catalysed reaction is L-arginyl-[protein] + NAD(+) = N(omega)-(ADP-D-ribosyl)-L-arginyl-[protein] + nicotinamide + H(+). Functionally, ADP-ribosyltransferase that targets a specific class of NAD(+)-dependent glutamate dehydrogenase (GDH) enzymes found in fungi and protists, including many natural hosts of Legionella. Acts by targeting a conserved arginine residue in the NAD(+)-binding pocket of GDH, thereby blocking oxidative deamination of glutamate. Lart1 may target amoeba GDH to prevent a conserved stress response. In vitro, acts on Glud2 from the amoeba Dictyostelium discoideum (DdGluD2) and yeast Gdh2p but does not act on human or Legionella GDH homologs. This Legionella pneumophila subsp. pneumophila (strain Philadelphia 1 / ATCC 33152 / DSM 7513) protein is NAD(+)--arginine ADP-ribosyltransferase Lart1.